Reading from the N-terminus, the 679-residue chain is Glycine--tRNA ligase beta subunit (679 aa).

Belongs to the class-II aminoacyl-tRNA synthetase family. In terms of assembly, tetramer of two alpha and two beta subunits.

The protein localises to the cytoplasm. It catalyses the reaction tRNA(Gly) + glycine + ATP = glycyl-tRNA(Gly) + AMP + diphosphate. The sequence is that of Glycine--tRNA ligase beta subunit from Streptococcus pyogenes serotype M49 (strain NZ131).